The primary structure comprises 490 residues: MTKVCPEIEGTLSLSVVPVSVDVSFASDHFPTYKLGPDNQIVEEPKEDEKGPSVKETVEKESELLSDQHKRLSVRDLASKFDKNLAAAVSLANEAKLREVASLEGHVMLKKLRDALEYMRGRTDGQNKQDVETAISMVEALAVKLTQNEGELIQEKFEVKKLGNFLKQTSEDAKKLVNQEKSFSCAEIETARAVVLRLGEAFEEQERISEASRAQGPDVEKLVEEVQEARQIKRMHHPTKVMGMQHELHGLRNRIQEKYMNSVKLHKEIAIIKRVEESKSCPFVLEGKQSLGSCLRIRVNAQDNAPDLSNCSIQWYRAACETSRREAISGAIQSMYAPEPFDVGRILQADILSNGQKFTVTTDDPVDPDSGLPSRVESLMRKSNSEFSVVISQMNGQDYASRSHVFTVGKTRIKLSRGWITKARELYSTSMQLCGVRGNIKAPTKAVFWQPRKSLTFILTFESEHERNAAIALARKYAFDCSVTLLGPDD.

This sequence belongs to the SCAB family. Expressed in roots, stems, leaves, siliques and flowers.

It localises to the cytoplasm. The protein localises to the cytoskeleton. Functionally, probable plant-specific actin binding protein that bundles and stabilizes microfilaments (MFs). This Arabidopsis thaliana (Mouse-ear cress) protein is Stomatal closure-related actin-binding protein 3.